Consider the following 524-residue polypeptide: Cytochrome P450 CYP749A22 (524 aa).

The chain crosses the membrane as a helical span at residues 12–32 (TPILFQFLLSSLCVFLLFVFI). Cysteine 472 is a heme binding site.

Belongs to the cytochrome P450 family. Heme serves as cofactor.

The protein resides in the membrane. Probable heme-thiolate monooxygenase. The polypeptide is Cytochrome P450 CYP749A22 (Panax ginseng (Korean ginseng)).